We begin with the raw amino-acid sequence, 414 residues long: Histidine--tRNA ligase (414 aa).

This sequence belongs to the class-II aminoacyl-tRNA synthetase family. Homodimer.

It localises to the cytoplasm. It carries out the reaction tRNA(His) + L-histidine + ATP = L-histidyl-tRNA(His) + AMP + diphosphate + H(+). The chain is Histidine--tRNA ligase from Pelobacter propionicus (strain DSM 2379 / NBRC 103807 / OttBd1).